We begin with the raw amino-acid sequence, 205 residues long: Recombination protein RecR (205 aa).

A C4-type zinc finger spans residues 64–79 (CSRCYFITQGDLCAIC). The Toprim domain maps to 87–182 (RVICVVEEPL…RVTRLARGLP (96 aa)).

It belongs to the RecR family.

Functionally, may play a role in DNA repair. It seems to be involved in an RecBC-independent recombinational process of DNA repair. It may act with RecF and RecO. The polypeptide is Recombination protein RecR (Roseiflexus sp. (strain RS-1)).